The primary structure comprises 1441 residues: Gag-Pol polyprotein (1441 aa).

Gly2 carries N-myristoyl glycine; by host lipidation. A Nuclear export signal motif is present at residues 16–22 (FEKIRLK). The Nuclear localization signal signature appears at 26 to 32 (KKCYRLK). The disordered stretch occupies residues 204–226 (THPQQQPAQPGGGLRTPSGSDIA). CCHC-type zinc fingers lie at residues 386–403 (PICFNCNKEGHVARFFKA) and 407–424 (KGCWNCGAMDHQKAQCPK). The segment covering 444–466 (TGELSGTRGDSNSSTIRGETSAE) has biased composition (polar residues). Residues 444 to 494 (TGELSGTRGDSNSSTIRGETSAENSEHLSEIRERAQAEDEGGEERGGFSFP) are disordered. The span at 467 to 480 (NSEHLSEIRERAQA) shows a compositional bias: basic and acidic residues. In terms of domain architecture, Peptidase A2 spans 513 to 584 (IRALLDTGAD…TPIDIIGRNI (72 aa)). The active-site For protease activity; shared with dimeric partner is the Asp518. The Reverse transcriptase domain occupies 640-830 (EGKISRVDPG…PPFHWMGYEL (191 aa)). Residues Asp706, Asp781, and Asp782 each coordinate Mg(2+). The tract at residues 823-831 (FHWMGYELH) is RT 'primer grip'. The short motif at 994-1010 (WEDWWHEYWQCTWIPEV) is the Tryptophan repeat motif element. Residues 1030–1153 (LEGVETYYVD…IDKLVSSGIR (124 aa)) form the RNase H type-1 domain. Residues Asp1039, Glu1074, Asp1094, and Asp1145 each coordinate Mg(2+). Residues 1159 to 1200 (QNIEPAQEEHEKYHSNEAQLREKFHLPALVAKQIVQSCSKCC) form an Integrase-type zinc finger. Zn(2+)-binding residues include His1168, His1172, Cys1196, and Cys1199. The Integrase catalytic domain occupies 1210–1360 (TDASLGVWQI…TAGERIVNMI (151 aa)). Residues Asp1220 and Asp1272 each contribute to the Mg(2+) site. The segment at residues 1379 to 1426 (FKVYFREGRDQLWKGPGILLWKGEGAVVLKYQEEIKIVPRRKCKIIKD) is a DNA-binding region (integrase-type).

As to quaternary structure, homotrimer. Interacts with gp41 (via C-terminus). Homodimer. The active site consists of two apposed aspartic acid residues. In terms of assembly, heterodimer of p66 RT and p51 RT (RT p66/p51). Heterodimerization of RT is essential for DNA polymerase activity. Despite the sequence identities, p66 RT and p51 RT have distinct folding. As to quaternary structure, homotetramer; may further associate as a homohexadecamer. Mg(2+) serves as cofactor. Specific enzymatic cleavages by the viral protease yield mature proteins. The protease is released by autocatalytic cleavage. The polyprotein is cleaved during and after budding, this process is termed maturation. Proteolytic cleavage of p66 RT removes the RNase H domain to yield the p51 RT subunit. Post-translationally, capsid protein p24 is phosphorylated.

Its subcellular location is the virion. The protein localises to the host nucleus. It localises to the host cytoplasm. The protein resides in the host cell membrane. It carries out the reaction Specific for a P1 residue that is hydrophobic, and P1' variable, but often Pro.. It catalyses the reaction Endohydrolysis of RNA in RNA/DNA hybrids. Three different cleavage modes: 1. sequence-specific internal cleavage of RNA. Human immunodeficiency virus type 1 and Moloney murine leukemia virus enzymes prefer to cleave the RNA strand one nucleotide away from the RNA-DNA junction. 2. RNA 5'-end directed cleavage 13-19 nucleotides from the RNA end. 3. DNA 3'-end directed cleavage 15-20 nucleotides away from the primer terminus.. The catalysed reaction is 3'-end directed exonucleolytic cleavage of viral RNA-DNA hybrid.. The enzyme catalyses DNA(n) + a 2'-deoxyribonucleoside 5'-triphosphate = DNA(n+1) + diphosphate. The viral protease is inhibited by many synthetic protease inhibitors (PIs), such as amprenavir, atazanavir, indinavir, loprinavir, nelfinavir, ritonavir and saquinavir. RT can be inhibited either by nucleoside RT inhibitors (NRTIs) or by non nucleoside RT inhibitors (NNRTIs). NRTIs act as chain terminators, whereas NNRTIs inhibit DNA polymerization by binding a small hydrophobic pocket near the RT active site and inducing an allosteric change in this region. Classical NRTIs are abacavir, adefovir (PMEA), didanosine (ddI), lamivudine (3TC), stavudine (d4T), tenofovir (PMPA), zalcitabine (ddC), and zidovudine (AZT). Classical NNRTIs are atevirdine (BHAP U-87201E), delavirdine, efavirenz (DMP-266), emivirine (I-EBU), and nevirapine (BI-RG-587). The tritherapies used as a basic effective treatment of AIDS associate two NRTIs and one NNRTI. Use of protease inhibitors in tritherapy regimens permit more ambitious therapeutic strategies. In terms of biological role, gag-Pol polyprotein and Gag polyprotein may regulate their own translation, by the binding genomic RNA in the 5'-UTR. At low concentration, Gag-Pol and Gag would promote translation, whereas at high concentration, the polyproteins encapsidate genomic RNA and then shut off translation. Its function is as follows. Matrix protein p17 has two main functions: in infected cell, it targets Gag and Gag-pol polyproteins to the plasma membrane via a multipartite membrane-binding signal, that includes its myristointegration complex. The myristoylation signal and the NLS exert conflicting influences its subcellular localization. The key regulation of these motifs might be phosphorylation of a portion of MA molecules on the C-terminal tyrosine at the time of virus maturation, by virion-associated cellular tyrosine kinase. Implicated in the release from host cell mediated by Vpu. Capsid protein p24 forms the conical core that encapsulates the genomic RNA-nucleocapsid complex in the virion. The core is constituted by capsid protein hexamer subunits. The core is disassembled soon after virion entry. Interaction with host PPIA/CYPA protects the virus from restriction by host TRIM5-alpha and from an unknown antiviral activity in host cells. This capsid restriction by TRIM5 is one of the factors which restricts SIV to the simian species. Functionally, nucleocapsid protein p7 encapsulates and protects viral dimeric unspliced (genomic) RNA. Binds these RNAs through its zinc fingers. Facilitates rearangement of nucleic acid secondary structure during retrotranscription of genomic RNA. This capability is referred to as nucleic acid chaperone activity. In terms of biological role, the aspartyl protease mediates proteolytic cleavages of Gag and Gag-Pol polyproteins during or shortly after the release of the virion from the plasma membrane. Cleavages take place as an ordered, step-wise cascade to yield mature proteins. This process is called maturation. Displays maximal activity during the budding process just prior to particle release from the cell. Also cleaves Nef and Vif, probably concomitantly with viral structural proteins on maturation of virus particles. Hydrolyzes host EIF4GI and PABP1 in order to shut off the capped cellular mRNA translation. The resulting inhibition of cellular protein synthesis serves to ensure maximal viral gene expression and to evade host immune response. Its function is as follows. Reverse transcriptase/ribonuclease H (RT) is a multifunctional enzyme that converts the viral dimeric RNA genome into dsDNA in the cytoplasm, shortly after virus entry into the cell. This enzyme displays a DNA polymerase activity that can copy either DNA or RNA templates, and a ribonuclease H (RNase H) activity that cleaves the RNA strand of RNA-DNA heteroduplexes in a partially processive 3' to 5' endonucleasic mode. Conversion of viral genomic RNA into dsDNA requires many steps. A tRNA binds to the primer-binding site (PBS) situated at the 5'-end of the viral RNA. RT uses the 3' end of the tRNA primer to perform a short round of RNA-dependent minus-strand DNA synthesis. The reading proceeds through the U5 region and ends after the repeated (R) region which is present at both ends of viral RNA. The portion of the RNA-DNA heteroduplex is digested by the RNase H, resulting in a ssDNA product attached to the tRNA primer. This ssDNA/tRNA hybridizes with the identical R region situated at the 3' end of viral RNA. This template exchange, known as minus-strand DNA strong stop transfer, can be either intra- or intermolecular. RT uses the 3' end of this newly synthesized short ssDNA to perform the RNA-dependent minus-strand DNA synthesis of the whole template. RNase H digests the RNA template except for two polypurine tracts (PPTs) situated at the 5'-end and near the center of the genome. It is not clear if both polymerase and RNase H activities are simultaneous. RNase H can probably proceed both in a polymerase-dependent (RNA cut into small fragments by the same RT performing DNA synthesis) and a polymerase-independent mode (cleavage of remaining RNA fragments by free RTs). Secondly, RT performs DNA-directed plus-strand DNA synthesis using the PPTs that have not been removed by RNase H as primers. PPTs and tRNA primers are then removed by RNase H. The 3' and 5' ssDNA PBS regions hybridize to form a circular dsDNA intermediate. Strand displacement synthesis by RT to the PBS and PPT ends produces a blunt ended, linear dsDNA copy of the viral genome that includes long terminal repeats (LTRs) at both ends. Integrase catalyzes viral DNA integration into the host chromosome, by performing a series of DNA cutting and joining reactions. This enzyme activity takes place after virion entry into a cell and reverse transcription of the RNA genome in dsDNA. The first step in the integration process is 3' processing. This step requires a complex comprising the viral genome, matrix protein, Vpr and integrase. This complex is called the pre-integration complex (PIC). The integrase protein removes 2 nucleotides from each 3' end of the viral DNA, leaving recessed CA OH's at the 3' ends. In the second step, the PIC enters cell nucleus. This process is mediated through integrase and Vpr proteins, and allows the virus to infect a non dividing cell. This ability to enter the nucleus is specific of lentiviruses, other retroviruses cannot and rely on cell division to access cell chromosomes. In the third step, termed strand transfer, the integrase protein joins the previously processed 3' ends to the 5' ends of strands of target cellular DNA at the site of integration. The 5'-ends are produced by integrase-catalyzed staggered cuts, 5 bp apart. A Y-shaped, gapped, recombination intermediate results, with the 5'-ends of the viral DNA strands and the 3' ends of target DNA strands remaining unjoined, flanking a gap of 5 bp. The last step is viral DNA integration into host chromosome. This involves host DNA repair synthesis in which the 5 bp gaps between the unjoined strands are filled in and then ligated. Since this process occurs at both cuts flanking the SIV genome, a 5 bp duplication of host DNA is produced at the ends of SIV integration. Alternatively, Integrase may catalyze the excision of viral DNA just after strand transfer, this is termed disintegration. This Cercopithecidae (Old World monkeys) protein is Gag-Pol polyprotein (gag-pol).